We begin with the raw amino-acid sequence, 580 residues long: N(6)-adenosine-methyltransferase catalytic subunit METTL3 (580 aa).

The tract at residues 1 to 70 (MSDTWSSIQA…PKPSTASAVP (70 aa)) is disordered. S2 bears the N-acetylserine; alternate mark. A Phosphoserine; alternate modification is found at S2. Basic and acidic residues predominate over residues 28 to 37 (QDSGHLDLRN). Phosphoserine is present on residues S43, S48, and S50. Glycyl lysine isopeptide (Lys-Gly) (interchain with G-Cter in SUMO1) cross-links involve residues K177, K211, K212, and K215. The tract at residues 198-219 (LNSSASEPAKEPAKKSRKHAAS) is disordered. The Nuclear localization signal motif lies at 210–215 (AKKSRK). 2 positions are modified to phosphoserine: S219 and S243. T348 carries the phosphothreonine modification. S350 bears the Phosphoserine mark. Residues 377-378 (DI) and D395 contribute to the S-adenosyl-L-methionine site. The tract at residues 396–410 (PPWDIHMELPYGTLT) is gate loop 1. 2 interaction with METTL14 regions span residues 450–454 (ERVDE) and 464–480 (QRII…NHGK). The interphase loop stretch occupies residues 462–479 (QLQRIIRTGRTGHWLNHG). A positively charged region required for RNA-binding region spans residues 465–478 (RIIRTGRTGHWLNH). The segment at 507–515 (VRSTSHKPD) is gate loop 2. Residues K513, 536–539 (RPHN), and 549–550 (NQ) contribute to the S-adenosyl-L-methionine site.

The protein belongs to the MT-A70-like family. As to quaternary structure, heterodimer; heterodimerizes with METTL14 to form an antiparallel heterodimer that constitutes an active methyltransferase. Component of the WMM complex, a N6-methyltransferase complex composed of a catalytic subcomplex, named MAC, and of an associated subcomplex, named MACOM. The MAC subcomplex is composed of METTL3 and METTL14. The MACOM subcomplex is composed of WTAP, ZC3H13, CBLL1/HAKAI, VIRMA, and, in some cases of RBM15 (RBM15 or RBM15B). Interacts with NCBP1/CBP80. Interacts with EIF4E. Interacts with EIF3B. Post-translationally, sumoylation inhibits the N6-adenosine-methyltransferase activity. Sumoylation does not affect subcellular location or interaction with METTL14. Desumoylated by SENP1. As to expression, widely expressed at low level. Expressed in spleen, thymus, prostate, testis, ovary, small intestine, colon and peripheral blood leukocytes.

It is found in the nucleus. Its subcellular location is the nucleus speckle. The protein resides in the cytoplasm. The catalysed reaction is an adenosine in mRNA + S-adenosyl-L-methionine = an N(6)-methyladenosine in mRNA + S-adenosyl-L-homocysteine + H(+). Methyltransferase activity is regulated by miRNAs via a sequence pairing mechanism. Methyltransferase activity is inhibited by sumoylation. The METTL3-METTL14 heterodimer forms a N6-methyltransferase complex that methylates adenosine residues at the N(6) position of some RNAs and regulates various processes such as the circadian clock, differentiation of embryonic and hematopoietic stem cells, cortical neurogenesis, response to DNA damage, differentiation of T-cells and primary miRNA processing. In the heterodimer formed with METTL14, METTL3 constitutes the catalytic core. N6-methyladenosine (m6A), which takes place at the 5'-[AG]GAC-3' consensus sites of some mRNAs, plays a role in mRNA stability, processing, translation efficiency and editing. M6A acts as a key regulator of mRNA stability: methylation is completed upon the release of mRNA into the nucleoplasm and promotes mRNA destabilization and degradation. In embryonic stem cells (ESCs), m6A methylation of mRNAs encoding key naive pluripotency-promoting transcripts results in transcript destabilization, promoting differentiation of ESCs. M6A regulates the length of the circadian clock: acts as an early pace-setter in the circadian loop by putting mRNA production on a fast-track for facilitating nuclear processing, thereby providing an early point of control in setting the dynamics of the feedback loop. M6A also regulates circadian regulation of hepatic lipid metabolism. M6A regulates spermatogonial differentiation and meiosis and is essential for male fertility and spermatogenesis. Also required for oogenesis. Involved in the response to DNA damage: in response to ultraviolet irradiation, METTL3 rapidly catalyzes the formation of m6A on poly(A) transcripts at DNA damage sites, leading to the recruitment of POLK to DNA damage sites. M6A is also required for T-cell homeostasis and differentiation: m6A methylation of transcripts of SOCS family members (SOCS1, SOCS3 and CISH) in naive T-cells promotes mRNA destabilization and degradation, promoting T-cell differentiation. Inhibits the type I interferon response by mediating m6A methylation of IFNB. M6A also takes place in other RNA molecules, such as primary miRNA (pri-miRNAs). Mediates m6A methylation of Xist RNA, thereby participating in random X inactivation: m6A methylation of Xist leads to target YTHDC1 reader on Xist and promote transcription repression activity of Xist. M6A also regulates cortical neurogenesis: m6A methylation of transcripts related to transcription factors, neural stem cells, the cell cycle and neuronal differentiation during brain development promotes their destabilization and decay, promoting differentiation of radial glial cells. METTL3 mediates methylation of pri-miRNAs, marking them for recognition and processing by DGCR8. Acts as a positive regulator of mRNA translation independently of the methyltransferase activity: promotes translation by interacting with the translation initiation machinery in the cytoplasm. Its overexpression in a number of cancer cells suggests that it may participate in cancer cell proliferation by promoting mRNA translation. During human coronavirus SARS-CoV-2 infection, adds m6A modifications in SARS-CoV-2 RNA leading to decreased RIGI binding and subsequently dampening the sensing and activation of innate immune responses. The protein is N(6)-adenosine-methyltransferase catalytic subunit METTL3 of Homo sapiens (Human).